A 209-amino-acid chain; its full sequence is Methylthioribulose-1-phosphate dehydratase (209 aa).

The Zn(2+) site is built by His99 and His101.

Belongs to the aldolase class II family. MtnB subfamily. Zn(2+) is required as a cofactor.

The catalysed reaction is 5-(methylsulfanyl)-D-ribulose 1-phosphate = 5-methylsulfanyl-2,3-dioxopentyl phosphate + H2O. It participates in amino-acid biosynthesis; L-methionine biosynthesis via salvage pathway; L-methionine from S-methyl-5-thio-alpha-D-ribose 1-phosphate: step 2/6. Catalyzes the dehydration of methylthioribulose-1-phosphate (MTRu-1-P) into 2,3-diketo-5-methylthiopentyl-1-phosphate (DK-MTP-1-P). The chain is Methylthioribulose-1-phosphate dehydratase from Leptospira biflexa serovar Patoc (strain Patoc 1 / Ames).